Reading from the N-terminus, the 327-residue chain is Eukaryotic translation initiation factor 3 subunit I (327 aa).

WD repeat units follow at residues 8–49 (GHDR…GTYD), 51–91 (HNGV…NSVS), 144–183 (SLQT…DIVN), 188–227 (AHKF…CLKT), 229–268 (KAER…GHFE), and 285–324 (GHFG…LKFD).

The protein belongs to the eIF-3 subunit I family. Component of the eukaryotic translation initiation factor 3 (eIF-3) complex.

Its subcellular location is the cytoplasm. Functionally, component of the eukaryotic translation initiation factor 3 (eIF-3) complex, which is involved in protein synthesis of a specialized repertoire of mRNAs and, together with other initiation factors, stimulates binding of mRNA and methionyl-tRNAi to the 40S ribosome. The eIF-3 complex specifically targets and initiates translation of a subset of mRNAs involved in cell proliferation. The protein is Eukaryotic translation initiation factor 3 subunit I of Brugia malayi (Filarial nematode worm).